We begin with the raw amino-acid sequence, 301 residues long: Acetylglutamate kinase (301 aa).

Substrate contacts are provided by residues 71–72 (GG), R93, and N198.

It belongs to the acetylglutamate kinase family. ArgB subfamily.

It localises to the cytoplasm. The catalysed reaction is N-acetyl-L-glutamate + ATP = N-acetyl-L-glutamyl 5-phosphate + ADP. Its pathway is amino-acid biosynthesis; L-arginine biosynthesis; N(2)-acetyl-L-ornithine from L-glutamate: step 2/4. Its function is as follows. Catalyzes the ATP-dependent phosphorylation of N-acetyl-L-glutamate. This chain is Acetylglutamate kinase, found in Rhizorhabdus wittichii (strain DSM 6014 / CCUG 31198 / JCM 15750 / NBRC 105917 / EY 4224 / RW1) (Sphingomonas wittichii).